Reading from the N-terminus, the 507-residue chain is ATP synthase subunit alpha, chloroplastic (507 aa).

170–177 (GDRQTGKT) serves as a coordination point for ATP. Threonine 257 is subject to Phosphothreonine.

It belongs to the ATPase alpha/beta chains family. In terms of assembly, F-type ATPases have 2 components, CF(1) - the catalytic core - and CF(0) - the membrane proton channel. CF(1) has five subunits: alpha(3), beta(3), gamma(1), delta(1), epsilon(1). CF(0) has four main subunits: a, b, b' and c.

The protein resides in the plastid. The protein localises to the chloroplast thylakoid membrane. It catalyses the reaction ATP + H2O + 4 H(+)(in) = ADP + phosphate + 5 H(+)(out). Its function is as follows. Produces ATP from ADP in the presence of a proton gradient across the membrane. The alpha chain is a regulatory subunit. The chain is ATP synthase subunit alpha, chloroplastic from Barbarea verna (Land cress).